Here is a 337-residue protein sequence, read N- to C-terminus: Biotin synthase (337 aa).

The Radical SAM core domain occupies alanine 52–arginine 281. Residues cysteine 67, cysteine 71, and cysteine 74 each coordinate [4Fe-4S] cluster. Residues cysteine 112, cysteine 144, cysteine 204, and arginine 276 each contribute to the [2Fe-2S] cluster site.

Belongs to the radical SAM superfamily. Biotin synthase family. Homodimer. Requires [4Fe-4S] cluster as cofactor. It depends on [2Fe-2S] cluster as a cofactor.

The enzyme catalyses (4R,5S)-dethiobiotin + (sulfur carrier)-SH + 2 reduced [2Fe-2S]-[ferredoxin] + 2 S-adenosyl-L-methionine = (sulfur carrier)-H + biotin + 2 5'-deoxyadenosine + 2 L-methionine + 2 oxidized [2Fe-2S]-[ferredoxin]. The protein operates within cofactor biosynthesis; biotin biosynthesis; biotin from 7,8-diaminononanoate: step 2/2. Its function is as follows. Catalyzes the conversion of dethiobiotin (DTB) to biotin by the insertion of a sulfur atom into dethiobiotin via a radical-based mechanism. The protein is Biotin synthase of Methylobacterium radiotolerans (strain ATCC 27329 / DSM 1819 / JCM 2831 / NBRC 15690 / NCIMB 10815 / 0-1).